The sequence spans 527 residues: MAVATTEELYQRLLRSIREGVDLQPKMVNVGTVIQVGDGVARISGLEQAMASELLEFPPKAGRSEPVYGIALNLEKDSVSAIILGDYLGIEEGDQVNSTGRVISVPVGQALIGRVVNALGQPIDGKGPIQTTTYRPIERIAPGVITRKSVDTPVQTGIIAIDSMIPIGRGQRELIIGDRQTGKTAVAIDTIINQKGQGMVCIYVAIGQKRAQVAQIINILEKYGALDYTIVVAATASESAALQYIAPYAGCAMGEEVMENGVMIDGREVRDALIVYDDLSKHATAYRQVSLLLRRPPGREAYPGDVFYLHSRLLERAARLNEDYGGGSLTALPIIETQANDVSAYIPTNVISITDGQIYLETDLFNAGIRPALNVGISVSRVGGAAQTRAMRSVSDRLKIDMAQFRDLAAFAQFASDLDATTRAQIERGQRLQEVLKQPQFQPMPLEEQVVILFAGINGYLDDVPINQIGRFKAELFTYMRTAHPEVGKMIYDNRLDRKFPSPEIRSAIENMLKEFKQMSDFSAEQA.

177–184 is a binding site for ATP; the sequence is GDRQTGKT.

Belongs to the ATPase alpha/beta chains family. In terms of assembly, F-type ATPases have 2 components, CF(1) - the catalytic core - and CF(0) - the membrane proton channel. CF(1) has five subunits: alpha(3), beta(3), gamma(1), delta(1), epsilon(1). CF(0) has four main subunits: a(1), b(1), b'(1) and c(9-12).

Its subcellular location is the cell membrane. The catalysed reaction is ATP + H2O + 4 H(+)(in) = ADP + phosphate + 5 H(+)(out). Its function is as follows. Produces ATP from ADP in the presence of a proton gradient across the membrane. The alpha chain is a regulatory subunit. This is ATP synthase subunit alpha from Roseiflexus sp. (strain RS-1).